The following is a 235-amino-acid chain: Voltage-gated hydrogen channel 1 (235 aa).

Residues 1–62 (MSRYLKHFTV…VMKKLFSSRR (62 aa)) are Cytoplasmic-facing. The helical transmembrane segment at 63–83 (FQIVIVFLVIVDALLVLGELL) threads the bilayer. Topologically, residues 84–100 (MDLKIIHPDKYHIAPKV) are extracellular. The helical transmembrane segment at 101 to 123 (FHYLSLSILTIFLVEVGFKIFVY) threads the bilayer. At 124–131 (GREFFHHK) the chain is on the cytoplasmic side. A helical transmembrane segment spans residues 132 to 152 (FEVLDSIVVVVSFILDLVLLF). Residues 153-159 (REHEFEA) lie on the Extracellular side of the membrane. The chain crosses the membrane as a helical span at residues 160-180 (VGLLILLRLWRVARIINGIIL). The Cytoplasmic portion of the chain corresponds to 181 to 235 (SVKTRSEQQVSKLKQVNLKLATKVEQLQHSCVEKEQEIERLTRMLKQHGLLSEQT). Residues 187–228 (EQQVSKLKQVNLKLATKVEQLQHSCVEKEQEIERLTRMLKQH) adopt a coiled-coil conformation.

This sequence belongs to the hydrogen channel family. Homodimer.

It is found in the membrane. The protein resides in the cell membrane. Mediates the voltage-dependent proton permeability of excitable membranes. Forms a proton-selective channel through which protons may pass in accordance with their electrochemical gradient. This chain is Voltage-gated hydrogen channel 1 (HVCN1), found in Gallus gallus (Chicken).